Consider the following 166-residue polypeptide: Cytochrome c-type biogenesis protein CcmE (166 aa).

Residues 1–8 are Cytoplasmic-facing; the sequence is MNAVRRKK. Residues 9–29 form a helical; Signal-anchor for type II membrane protein membrane-spanning segment; that stretch reads LMWVMFTLAGAVIAVALVIYA. Topologically, residues 30–166 are periplasmic; the sequence is IGKQTDYYFD…KLHETKTLQQ (137 aa). Heme-binding residues include His124 and Tyr128. The disordered stretch occupies residues 133–166; that stretch reads VAKSMKENNRSGAVPSSEQYNPAEKLHETKTLQQ. Residues 142–152 show a composition bias toward polar residues; the sequence is RSGAVPSSEQY. Residues 156 to 166 are compositionally biased toward basic and acidic residues; sequence EKLHETKTLQQ.

It belongs to the CcmE/CycJ family.

Its subcellular location is the cell inner membrane. Functionally, heme chaperone required for the biogenesis of c-type cytochromes. Transiently binds heme delivered by CcmC and transfers the heme to apo-cytochromes in a process facilitated by CcmF and CcmH. The sequence is that of Cytochrome c-type biogenesis protein CcmE from Psychrobacter arcticus (strain DSM 17307 / VKM B-2377 / 273-4).